The following is a 167-amino-acid chain: Putative NADH-quinone oxidoreductase subunit B 2 (167 aa).

It belongs to the complex I 20 kDa subunit family. As to quaternary structure, NDH-1 is composed of 14 different subunits. Subunits NuoB, C, D, E, F, and G constitute the peripheral sector of the complex.

It is found in the cell inner membrane. The catalysed reaction is a quinone + NADH + 5 H(+)(in) = a quinol + NAD(+) + 4 H(+)(out). In terms of biological role, NDH-1 shuttles electrons from NADH, via FMN and iron-sulfur (Fe-S) centers, to quinones in the respiratory chain. Couples the redox reaction to proton translocation (for every two electrons transferred, four hydrogen ions are translocated across the cytoplasmic membrane), and thus conserves the redox energy in a proton gradient. This Burkholderia pseudomallei (strain 1710b) protein is Putative NADH-quinone oxidoreductase subunit B 2.